The sequence spans 424 residues: Probable serine/threonine-protein kinase PBL15 (424 aa).

Residues 99-380 enclose the Protein kinase domain; it reads FSGNYLLGEG…AVVEALESLI (282 aa). ATP is bound by residues 105 to 113 and Lys-134; that span reads LGEGGFGKV. Position 179 is a phosphotyrosine (Tyr-179). Asp-229 functions as the Proton acceptor in the catalytic mechanism. Ser-233 carries the post-translational modification Phosphoserine. Residues Thr-264 and Thr-269 each carry the phosphothreonine modification. Tyr-277 bears the Phosphotyrosine mark. Positions 390–424 are disordered; sequence GHWPLSPKSQGGKVSPKVRGDHRSGRKSAPGSLRS.

The protein belongs to the protein kinase superfamily. Ser/Thr protein kinase family. In terms of assembly, interacts with the Xanthomonas campestris effector XopAC/AvrAC.

It is found in the cell membrane. It carries out the reaction L-seryl-[protein] + ATP = O-phospho-L-seryl-[protein] + ADP + H(+). It catalyses the reaction L-threonyl-[protein] + ATP = O-phospho-L-threonyl-[protein] + ADP + H(+). Functionally, may be involved in plant defense signaling. The chain is Probable serine/threonine-protein kinase PBL15 from Arabidopsis thaliana (Mouse-ear cress).